A 191-amino-acid chain; its full sequence is Nucleoside triphosphate pyrophosphatase (191 aa).

The Proton acceptor role is filled by aspartate 70.

This sequence belongs to the Maf family. Requires a divalent metal cation as cofactor.

It localises to the cytoplasm. It catalyses the reaction a ribonucleoside 5'-triphosphate + H2O = a ribonucleoside 5'-phosphate + diphosphate + H(+). The enzyme catalyses a 2'-deoxyribonucleoside 5'-triphosphate + H2O = a 2'-deoxyribonucleoside 5'-phosphate + diphosphate + H(+). Functionally, nucleoside triphosphate pyrophosphatase. May have a dual role in cell division arrest and in preventing the incorporation of modified nucleotides into cellular nucleic acids. The polypeptide is Nucleoside triphosphate pyrophosphatase (Synechococcus sp. (strain WH7803)).